Here is a 154-residue protein sequence, read N- to C-terminus: uncharacterized protein (154 aa).

The first 21 residues, Met-1–Thr-21, serve as a signal peptide directing secretion.

Belongs to the ivy family.

It is found in the periplasm. This is an uncharacterized protein from Yersinia pestis.